Consider the following 93-residue polypeptide: C-C motif chemokine 17 (93 aa).

A signal peptide spans 1-23 (MMSLQMLLLAALLLGTSLQHASA). Cystine bridges form between Cys33-Cys57 and Cys34-Cys73.

This sequence belongs to the intercrine beta (chemokine CC) family.

It localises to the secreted. Its function is as follows. Chemokine, which displays chemotactic activity for T lymphocytes, preferentially Th2 cells, but not monocytes or granulocytes. Therefore plays an important role in a wide range of inflammatory and immunological processes. Acts by binding to CCR4 at T-cell surface. Mediates GM-CSF/CSF2-driven pain and inflammation. In the brain, required to maintain the typical, highly branched morphology of hippocampal microglia under homeostatic conditions. May be important for the appropriate adaptation of microglial morphology and synaptic plasticity to acute lipopolysaccharide (LPS)-induced neuroinflammation. Plays a role in wound healing, mainly by inducing fibroblast migration into the wound. The chain is C-C motif chemokine 17 (Ccl17) from Rattus norvegicus (Rat).